The sequence spans 1046 residues: Toluene efflux pump membrane transporter TtgE (1046 aa).

The next 12 helical transmembrane spans lie at Ile-10–Met-30, Ser-339–Leu-359, Leu-370–Ile-390, Val-392–Val-412, Gly-440–Gly-460, Phe-470–Pro-490, Leu-542–Phe-562, Ala-871–Glu-891, Val-895–Leu-915, Val-927–Ala-947, Ile-973–Ala-993, and Gly-1008–Val-1028.

The protein belongs to the resistance-nodulation-cell division (RND) (TC 2.A.6) family.

It is found in the cell inner membrane. Functionally, the inner membrane transporter component of an inducible organic solvent efflux pump. Involved in export of toluene and styrene but not of m-xylene, propylbenzene or ethylbenzene. Is not involved in antibiotic or AMP efflux. The sequence is that of Toluene efflux pump membrane transporter TtgE (ttgE) from Pseudomonas putida (strain DOT-T1E).